The chain runs to 211 residues: Protein G12 (211 aa).

Positions Met-1–Cys-19 are cleaved as a signal peptide.

In Anopheles gambiae (African malaria mosquito), this protein is Protein G12.